A 175-amino-acid polypeptide reads, in one-letter code: Inorganic pyrophosphatase (175 aa).

Substrate is bound by residues Lys30, Arg44, and Tyr56. The Mg(2+) site is built by Asp66, Asp71, and Asp103. Tyr140 lines the substrate pocket.

This sequence belongs to the PPase family. As to quaternary structure, homohexamer. Mg(2+) is required as a cofactor.

It is found in the cytoplasm. The catalysed reaction is diphosphate + H2O = 2 phosphate + H(+). Functionally, catalyzes the hydrolysis of inorganic pyrophosphate (PPi) forming two phosphate ions. This is Inorganic pyrophosphatase from Thermus thermophilus (strain ATCC 27634 / DSM 579 / HB8).